Here is a 549-residue protein sequence, read N- to C-terminus: Glucose-6-phosphate isomerase (549 aa).

The Proton donor role is filled by Glu-353. Active-site residues include His-384 and Lys-510.

Belongs to the GPI family.

The protein resides in the cytoplasm. The catalysed reaction is alpha-D-glucose 6-phosphate = beta-D-fructose 6-phosphate. The protein operates within carbohydrate biosynthesis; gluconeogenesis. It participates in carbohydrate degradation; glycolysis; D-glyceraldehyde 3-phosphate and glycerone phosphate from D-glucose: step 2/4. Catalyzes the reversible isomerization of glucose-6-phosphate to fructose-6-phosphate. The chain is Glucose-6-phosphate isomerase from Mycolicibacterium smegmatis (Mycobacterium smegmatis).